We begin with the raw amino-acid sequence, 423 residues long: Dihydroorotase (423 aa).

2 residues coordinate Zn(2+): His-56 and His-58. Residues 58–60 and Asn-89 each bind substrate; that span reads HFR. Lys-137, His-168, His-227, and Asp-302 together coordinate Zn(2+). Lys-137 is modified (N6-carboxylysine). Asp-302 is a catalytic residue. His-306 serves as a coordination point for substrate.

Belongs to the metallo-dependent hydrolases superfamily. DHOase family. Class I DHOase subfamily. The cofactor is Zn(2+).

The enzyme catalyses (S)-dihydroorotate + H2O = N-carbamoyl-L-aspartate + H(+). The protein operates within pyrimidine metabolism; UMP biosynthesis via de novo pathway; (S)-dihydroorotate from bicarbonate: step 3/3. Catalyzes the reversible cyclization of carbamoyl aspartate to dihydroorotate. This Methanocaldococcus jannaschii (strain ATCC 43067 / DSM 2661 / JAL-1 / JCM 10045 / NBRC 100440) (Methanococcus jannaschii) protein is Dihydroorotase.